A 967-amino-acid polypeptide reads, in one-letter code: Zinc finger protein with KRAB and SCAN domains 2 (967 aa).

A Glycyl lysine isopeptide (Lys-Gly) (interchain with G-Cter in SUMO2) cross-link involves residue Lys22. Residues 45 to 127 form the SCAN box domain; it reads RKCFRQFCYE…ALVVHLEKET (83 aa). The disordered stretch occupies residues 150-205; the sequence is WEVADFQPEQVETQPRAVSREEPGSLHSGHQEQLNRKRERRPLPKNARPSPWVPAL. Over residues 167-185 the composition is skewed to basic and acidic residues; it reads VSREEPGSLHSGHQEQLNR. A KRAB domain is found at 229–300; it reads VKDVHVARGF…GLHSSNKRSI (72 aa). Residues Lys242, Lys259, Lys277, Lys337, Lys482, and Lys529 each participate in a glycyl lysine isopeptide (Lys-Gly) (interchain with G-Cter in SUMO2) cross-link. Residues 586 to 602 are compositionally biased toward low complexity; it reads RASAPSPSTPEEVPSPS. Residues 586–626 are disordered; that stretch reads RASAPSPSTPEEVPSPSRQERGGIEVEPQEPTGWEPEETSQ. A phosphoserine mark is found at Ser591 and Ser600. Residues Lys734, Lys745, and Lys752 each participate in a glycyl lysine isopeptide (Lys-Gly) (interchain with G-Cter in SUMO2) cross-link. 6 consecutive C2H2-type zinc fingers follow at residues 775–797, 803–825, 831–853, 859–881, 887–909, and 915–937; these read YKCG…QRIH, FKCL…QRIH, YRCG…QRTH, YQCG…RRVH, YKCV…RRIH, and YGCA…REVH. Residues 941 to 967 form a disordered region; that stretch reads KPLPHPPSLYCPENPHKGKTDEFRKTF. Over residues 954–967 the composition is skewed to basic and acidic residues; sequence NPHKGKTDEFRKTF.

The protein belongs to the krueppel C2H2-type zinc-finger protein family.

The protein resides in the nucleus. Its function is as follows. May be involved in transcriptional regulation. This is Zinc finger protein with KRAB and SCAN domains 2 (ZKSCAN2) from Homo sapiens (Human).